Reading from the N-terminus, the 308-residue chain is Bifunctional protein FolD (308 aa).

NADP(+)-binding positions include 175–177, Ser-200, and Ile-241; that span reads GRS.

It belongs to the tetrahydrofolate dehydrogenase/cyclohydrolase family. Homodimer.

The enzyme catalyses (6R)-5,10-methylene-5,6,7,8-tetrahydrofolate + NADP(+) = (6R)-5,10-methenyltetrahydrofolate + NADPH. It carries out the reaction (6R)-5,10-methenyltetrahydrofolate + H2O = (6R)-10-formyltetrahydrofolate + H(+). The protein operates within one-carbon metabolism; tetrahydrofolate interconversion. Functionally, catalyzes the oxidation of 5,10-methylenetetrahydrofolate to 5,10-methenyltetrahydrofolate and then the hydrolysis of 5,10-methenyltetrahydrofolate to 10-formyltetrahydrofolate. This is Bifunctional protein FolD from Jannaschia sp. (strain CCS1).